We begin with the raw amino-acid sequence, 87 residues long: Small ribosomal subunit protein bS20 (87 aa).

This sequence belongs to the bacterial ribosomal protein bS20 family.

In terms of biological role, binds directly to 16S ribosomal RNA. This Halothermothrix orenii (strain H 168 / OCM 544 / DSM 9562) protein is Small ribosomal subunit protein bS20.